The following is a 469-amino-acid chain: Calcium-binding mitochondrial carrier protein SCaMC-2-B (469 aa).

Residues 1 to 189 (MLCLCLYVPV…EKNTGMWWRH (189 aa)) are Mitochondrial intermembrane-facing. EF-hand domains follow at residues 47-80 (SYRK…RDHE), 78-113 (DHEK…LGVH), and 114-149 (ISEE…HPAE). Residues D60, D62, D64, Q66, and E71 each coordinate Ca(2+). Solcar repeat units lie at residues 184 to 270 (GMWW…IKRL), 278 to 363 (LGIL…LKNS), and 375 to 463 (PGVF…LKIT). A helical transmembrane segment spans residues 190 to 207 (LVAGGGAGAVSRTCTAPL). At 208-244 (DRLKVLMQVHATRSNSMGIAGGFTQMIREGGLRSLWR) the chain is on the mitochondrial matrix side. The helical transmembrane segment at 245 to 264 (GNGINVLKIAPESAIKFMAY) threads the bilayer. At 265 to 287 (EQIKRLIGSNQETLGILERLVSG) the chain is on the mitochondrial intermembrane side. The chain crosses the membrane as a helical span at residues 288-301 (SLAGAIAQSSIYPM). Topologically, residues 302 to 337 (EVLKTRLALGRTGQYSGIADCAKHIFKKEGMTAFYK) are mitochondrial matrix. Residues 338–357 (GYIPNMLGIIPYAGIDLAVY) form a helical membrane-spanning segment. At 358–380 (ETLKNSWLQRFATDSADPGVFVL) the chain is on the mitochondrial intermembrane side. A helical transmembrane segment spans residues 381 to 398 (LACGTMSSTCGQLASYPL). The Mitochondrial matrix segment spans residues 399–437 (ALVRTRMQAQASQEGSPQMTMSGLFRHIVRTEGAIGLYR). The chain crosses the membrane as a helical span at residues 438–457 (GLAPNFMKVIPAVSISYVVY). At 458–469 (ENLKITLGVQSR) the chain is on the mitochondrial intermembrane side.

The protein belongs to the mitochondrial carrier (TC 2.A.29) family.

It is found in the mitochondrion inner membrane. In terms of biological role, calcium-dependent mitochondrial solute carrier. This is Calcium-binding mitochondrial carrier protein SCaMC-2-B (slc25a25b) from Danio rerio (Zebrafish).